Consider the following 694-residue polypeptide: Two-component response regulator ORR25 (694 aa).

The region spanning 17-132 (RVLAVDDSPV…DIQNIWQHVW (116 aa)) is the Response regulatory domain. Asp-68 carries the 4-aspartylphosphate modification. The HTH myb-type domain maps to 183–242 (TLKRQRVVWTPELHRDFVIAVHELGVDRAVPRKILRMMKVDYMTRENIASHLQKYRLYLK). Residues 213–238 (PRKILRMMKVDYMTRENIASHLQKYR) constitute a DNA-binding region (H-T-H motif). Positions 326–349 (VGHGGSPGNNPVFQPLQNSSNARK) are disordered. Residues 333 to 347 (GNNPVFQPLQNSSNA) are compositionally biased toward polar residues.

It belongs to the ARR family. Type-B subfamily. In terms of processing, two-component system major event consists of a His-to-Asp phosphorelay between a sensor histidine kinase (HK) and a response regulator (RR). In plants, the His-to-Asp phosphorelay involves an additional intermediate named Histidine-containing phosphotransfer protein (HPt). This multistep phosphorelay consists of a His-Asp-His-Asp sequential transfer of a phosphate group between first a His and an Asp of the HK protein, followed by the transfer to a conserved His of the HPt protein and finally the transfer to an Asp in the receiver domain of the RR protein.

The protein resides in the nucleus. In terms of biological role, transcriptional activator that binds specific DNA sequence. Functions as a response regulator involved in His-to-Asp phosphorelay signal transduction system. Phosphorylation of the Asp residue in the receiver domain activates the ability of the protein to promote the transcription of target genes. May directly activate some type-A response regulators in response to cytokinins. This Oryza sativa subsp. japonica (Rice) protein is Two-component response regulator ORR25.